A 131-amino-acid polypeptide reads, in one-letter code: Small ribosomal subunit protein uS8 (131 aa).

Belongs to the universal ribosomal protein uS8 family. In terms of assembly, part of the 30S ribosomal subunit. Contacts proteins S5 and S12.

Functionally, one of the primary rRNA binding proteins, it binds directly to 16S rRNA central domain where it helps coordinate assembly of the platform of the 30S subunit. This Shewanella amazonensis (strain ATCC BAA-1098 / SB2B) protein is Small ribosomal subunit protein uS8.